Reading from the N-terminus, the 297-residue chain is Leucine-rich repeat-containing protein 25 (297 aa).

A signal peptide spans 1-25 (MGSIRTRLLWLCLLMLLALLHKSGS). At 26–169 (QDLTCMVHPS…SCPPSWGPGT (144 aa)) the chain is on the extracellular side. Residues Asn-44 and Asn-49 are each glycosylated (N-linked (GlcNAc...) asparagine). LRR repeat units follow at residues 66 to 89 (HAQVLDLSKNGLQVLPGAFFDKLE) and 90 to 113 (KLQTLIVTHNQLDSVDRSLALRCD). N-linked (GlcNAc...) asparagine glycans are attached at residues Asn-133 and Asn-152. The helical transmembrane segment at 170–190 (IGALVAGTISLAVAVSGSVLA) threads the bilayer. Over 191–297 (WRLLRRRRRA…VYCNLESLGR (107 aa)) the chain is Cytoplasmic. Positions 202–244 (EHSLSKAQMSPHDIPKPVTDFLPRYSSRRPGPKAPDSPPSRFT) are disordered. A phosphoserine mark is found at Ser-211, Ser-238, and Ser-267. A Phosphotyrosine modification is found at Tyr-289.

As to quaternary structure, interacts with RIGI. Interacts with SQSTM1. Interacts with p65/RELA; this interaction promotes the degradation of RELA through autophagy.

The protein localises to the membrane. It localises to the cytoplasm. Plays a role in the inhibition of RLR-mediated type I interferon signaling pathway by targeting RIGI for autophagic degradation. Interacts specifically with ISG15-associated RIGI to promote interaction between RIGI and the autophagic cargo receptor p62/SQSTM1 to mediate RIGI degradation via selective autophagy. Plays also a role in the inhibition of NF-kappa-B signaling pathway and inflammatory response by promoting the degradation of p65/RELA. The protein is Leucine-rich repeat-containing protein 25 (Lrrc25) of Mus musculus (Mouse).